Here is a 366-residue protein sequence, read N- to C-terminus: Inactive protein RESTRICTED TEV MOVEMENT 2 (366 aa).

One can recognise a sHSP domain in the interval 14–121 (VQYEDFVPKS…LPETSRTEAA (108 aa)). The stretch at 129–133 (LEEKR) is one A-1 repeat. Positions 129–220 (LEEKRLLEES…LEERRLEERK (92 aa)) are 6 X 5 AA repeats A of L-E-E-[SKR]-[ERK]. The stretch at 135–139 (LEESR) is one A-2 repeat. An A-3 repeat occupies 156–160 (LEEKE). Residues 163-176 (IRKLQEEAKAKEEA) form a B-1 repeat. The 3 X 14 AA repeats B of [IMA]-[RK]-K-L-Q-E-E-A-K-A-K-E-[EK]-[LA] stretch occupies residues 163–206 (IRKLQEEAKAKEEAEMRKLQEEAKANEEAAAKKLQEEIEAKEKL). The stretch at 178–191 (MRKLQEEAKANEEA) is one B-2 repeat. Residues 193–205 (AKKLQEEIEAKEK) form a B-3 repeat. The stretch at 206 to 210 (LEERK) is one A-4 repeat. An A-5 repeat occupies 211–215 (LEERR). The stretch at 216–220 (LEERK) is one A-6 repeat. The chain crosses the membrane as a helical span at residues 322-342 (LMMNVGVAALVIFALGAYVSY). The tract at residues 345–366 (CSSSSSSSSSSPSSSSSSTKPE) is disordered. The span at 346–366 (SSSSSSSSSSPSSSSSSTKPE) shows a compositional bias: low complexity.

It belongs to the small heat shock protein (HSP20) family.

Its subcellular location is the cell membrane. Functionally, seems to not be involved in heat resistance. Unable to mediate restriction of long-distance movement of the pathogenic tobacco etch virus (TEV) without causing a hypersensitive response or inducing systemic acquired resistance. This Arabidopsis thaliana (Mouse-ear cress) protein is Inactive protein RESTRICTED TEV MOVEMENT 2 (RTM2).